Reading from the N-terminus, the 189-residue chain is MAREPREGRGRERERDRDGDELIDKLVTINRVAKVVKGGRRFAFAALVVVGDQKGRVGFGAGKAKEVPEAIRKATERAKRGMIRVPMKEGRTLHHDIEGRFGAGHVVLRAAPPGTGIIAGGPMRAVFETLGIGDVVAKSLGSRNPHNMVKATVAALSQCASPRSVASRRGKKVADLFGPKREKEAPADV.

Residues 22–85 enclose the S5 DRBM domain; that stretch reads LIDKLVTINR…ERAKRGMIRV (64 aa). The segment at 164 to 189 is disordered; it reads SVASRRGKKVADLFGPKREKEAPADV. The segment covering 172–189 has biased composition (basic and acidic residues); that stretch reads KVADLFGPKREKEAPADV.

The protein belongs to the universal ribosomal protein uS5 family. In terms of assembly, part of the 30S ribosomal subunit. Contacts proteins S4 and S8.

In terms of biological role, with S4 and S12 plays an important role in translational accuracy. Functionally, located at the back of the 30S subunit body where it stabilizes the conformation of the head with respect to the body. The protein is Small ribosomal subunit protein uS5 of Acidiphilium cryptum (strain JF-5).